The chain runs to 411 residues: Potassium channel subfamily K member 3 (411 aa).

At 1–8 (MKRQNVRT) the chain is on the cytoplasmic side. A helical transmembrane segment spans residues 9-29 (LALIVCTFTYLLVGAAVFDAL). Residue Asn53 is glycosylated (N-linked (GlcNAc...) asparagine). Positions 78–101 (WRFAGSFYFAITVITTIGYGHAAP) form an intramembrane region, pore-forming. Residues 108–128 (VFCMFYALLGIPLTLVMFQSL) form a helical membrane-spanning segment. Residues 129 to 158 (GERINTFVRYLLHRAKRGLGMRHAEVSMAN) are Cytoplasmic-facing. Residues 159–179 (MVLIGFVSCISTLCIGAAAFS) form a helical membrane-spanning segment. The segment at residues 184 to 207 (WTFFQAYYYCFITLTTIGFGDYVA) is an intramembrane region (pore-forming). Residues 223 to 243 (FSFVYILTGLTVIGAFLNLVV) traverse the membrane as a helical segment. The Cytoplasmic portion of the chain corresponds to 244–411 (LRFMTMNAED…RGLMKRRSSV (168 aa)).

The protein belongs to the two pore domain potassium channel (TC 1.A.1.8) family. As to quaternary structure, homodimer. Heterodimer with KCNK1. Heterodimer with KCNK9. In terms of tissue distribution, strongest expression in heart. Moderate expression in lung and brain. Low levels in liver, kidney and skeletal muscle. Expressed in cerebellar granule cells (at protein level).

It is found in the cell membrane. The enzyme catalyses K(+)(in) = K(+)(out). It catalyses the reaction Na(+)(in) = Na(+)(out). Inhibited by extracellular acidification, muscarinic signaling, divalent metal cations Zn(2+) and Ba(2+), isoflurane, bupivacaine and phenytoin. Activated by protein kinase A. Ruthenium red resistant. K(+) channel that conducts voltage-dependent outward rectifying currents upon membrane depolarization. Voltage sensing is coupled to K(+) electrochemical gradient in an 'ion flux gating' mode where outward but not inward ion flow opens the gate. Changes ion selectivity and becomes permeable to Na(+) ions in response to extracellular acidification. Protonation of the pH sensor His-98 stabilizes C-type inactivation conformation likely converting the channel from outward K(+)-conducting, to inward Na(+)-conducting to nonconductive state. Homo- and heterodimerizes to form functional channels with distinct regulatory and gating properties. Allows K(+) currents with fast-gating kinetics important for the repolarization and hyperpolarization phases of action potentials. In cerebellar granule cells, heteromeric KCNK3:KCNK9 channel may hyperpolarize the resting membrane potential to limit intrinsic neuronal excitability, but once the action potential threshold is reached, it may support high-frequency action potential firing and increased neuronal excitability. Dispensable for central chemosensory respiration i.e. breathing controlled by brainstem CO2/pH, it rather conducts pH-sensitive currents and controls the firing rate of serotonergic raphe neurons involved in potentiation of the respiratory chemoreflex. Additionally, imparts chemosensitivity to type 1 cells in carotid bodies which respond to a decrease in arterial oxygen pressure or an increase in carbon dioxide pressure or pH to initiate adaptive changes in pulmonary ventilation. In adrenal gland, contributes to the maintenance of a hyperpolarized resting membrane potential of aldosterone-producing cells at zona glomerulosa and limits aldosterone release as part of a regulatory mechanism that controls arterial blood pressure and electrolyte homeostasis. In brown adipocytes, mediates K(+) efflux that counteracts norepinephrine-induced membrane depolarization, limits Ca(2+) efflux and downstream cAMP and PKA signaling, ultimately attenuating lipid oxidation and adaptive thermogenesis. The chain is Potassium channel subfamily K member 3 from Rattus norvegicus (Rat).